We begin with the raw amino-acid sequence, 674 residues long: Death-associated protein kinase related (674 aa).

A Protein kinase domain is found at 37 to 295 (EVEQTPFARG…ATGCLDHIWL (259 aa)). ATP contacts are provided by residues 43–51 (FARGKFAAV) and K66. Catalysis depends on D160, which acts as the Proton acceptor. Disordered stretches follow at residues 308–388 (QPQS…GGSI), 412–440 (TLTS…SDKE), 511–583 (DSSG…TSGS), and 614–650 (TSSA…HHHV). Over residues 312 to 343 (DAEEEEEEDVDDDVEDEEEEEQVEEEEEETQN) the composition is skewed to acidic residues. A compositionally biased stretch (low complexity) spans 352–363 (PQQQQQPVQQHQ). Over residues 373-382 (KPTHNGHHRA) the composition is skewed to basic residues. A phosphoserine mark is found at S384, S387, S435, S437, and S521. The span at 512–525 (SSGSAVARRSGGAV) shows a compositional bias: low complexity. Polar residues-rich tracts occupy residues 526–541 (TSSS…SVRL) and 555–564 (YKKQTSQNGC). Low complexity-rich tracts occupy residues 565-583 (SSTS…TSGS) and 614-631 (TSSA…TSAA). Residues 632 to 650 (HHLHHHHMHHHHHHHHHHV) show a composition bias toward basic residues.

The protein belongs to the protein kinase superfamily. Ser/Thr protein kinase family.

The enzyme catalyses L-seryl-[protein] + ATP = O-phospho-L-seryl-[protein] + ADP + H(+). It catalyses the reaction L-threonyl-[protein] + ATP = O-phospho-L-threonyl-[protein] + ADP + H(+). The chain is Death-associated protein kinase related (Drak) from Drosophila melanogaster (Fruit fly).